Reading from the N-terminus, the 447-residue chain is GTPase Der (447 aa).

2 EngA-type G domains span residues 4–165 (KIIT…PEEE) and 180–357 (LQIV…KIWN). GTP contacts are provided by residues 10-17 (GRPNVGKS), 57-61 (DTPGL), 119-122 (NKCE), 186-193 (GRPNAGKS), 233-237 (DTAGL), and 298-301 (NKWD). A KH-like domain is found at 358–443 (KKITTSKLNE…PIRFTYVKTK (86 aa)).

Belongs to the TRAFAC class TrmE-Era-EngA-EngB-Septin-like GTPase superfamily. EngA (Der) GTPase family. As to quaternary structure, associates with the 50S ribosomal subunit.

GTPase that plays an essential role in the late steps of ribosome biogenesis. This chain is GTPase Der, found in Rickettsia felis (strain ATCC VR-1525 / URRWXCal2) (Rickettsia azadi).